We begin with the raw amino-acid sequence, 158 residues long: MLP-like protein 43 (158 aa).

Position 2 is an N-acetylalanine (Ala-2).

The protein belongs to the MLP family.

The polypeptide is MLP-like protein 43 (MLP43) (Arabidopsis thaliana (Mouse-ear cress)).